The following is a 732-amino-acid chain: X-ray repair cross-complementing protein 5 (732 aa).

Residues 9–161 (AVVLCVDVGV…CNLKKSGISL (153 aa)) form the VWFA domain. The interval 138 to 165 (LSSPFSQDQLDVIICNLKKSGISLQFFL) is leucine-zipper. Lysine 195 participates in a covalent cross-link: Glycyl lysine isopeptide (Lys-Gly) (interchain with G-Cter in SUMO2). The 201-residue stretch at 253–453 (IGPNLSIKIV…CTPTEAQLSA (201 aa)) folds into the Ku domain. Serine 258 carries the phosphoserine modification. The residue at position 265 (lysine 265) is an N6-acetyllysine. Serine 318 carries the phosphoserine modification. An N6-acetyllysine modification is found at lysine 332. Residues lysine 532 and lysine 534 each participate in a glycyl lysine isopeptide (Lys-Gly) (interchain with G-Cter in SUMO2) cross-link. At threonine 535 the chain carries Phosphothreonine. Residues lysine 567 and lysine 569 each participate in a glycyl lysine isopeptide (Lys-Gly) (interchain with G-Cter in SUMO2) cross-link. Phosphoserine; by PRKDC occurs at positions 578, 580, and 581. Residue lysine 666 is modified to N6-acetyllysine. Glycyl lysine isopeptide (Lys-Gly) (interchain with G-Cter in SUMO2) cross-links involve residues lysine 670 and lysine 689. The disordered stretch occupies residues 708–732 (PKDKAKEDTTGPEEAGDVDDLLDMI). Threonine 716 carries the post-translational modification Phosphothreonine; by PRKDC. Over residues 717–732 (TGPEEAGDVDDLLDMI) the composition is skewed to acidic residues. The EEXXXDL motif motif lies at 720-728 (EEAGDVDDL).

It belongs to the ku80 family. In terms of assembly, heterodimer composed of XRCC5/Ku80 and XRCC6/Ku70. Component of the core long-range non-homologous end joining (NHEJ) complex (also named DNA-PK complex) composed of PRKDC, LIG4, XRCC4, XRCC6/Ku70, XRCC5/Ku86 and NHEJ1/XLF. Additional component of the NHEJ complex includes PAXX. Following autophosphorylation, PRKDC dissociates from DNA, leading to formation of the short-range NHEJ complex, composed of LIG4, XRCC4, XRCC6/Ku70, XRCC5/Ku86 and NHEJ1/XLF. The XRCC5-XRCC6 dimer also associates with NAA15, and this complex displays DNA binding activity towards the osteocalcin FGF response element (OCFRE). In addition, XRCC5 binds to the osteoblast-specific transcription factors MSX2 and RUNX2. Interacts with ELF3. Interacts with APLF (via KBM motif). The XRCC5/XRCC6 dimer associates in a DNA-dependent manner with APEX1. Identified in a complex with DEAF1 and XRCC6. Interacts with NR4A3; the DNA-dependent protein kinase complex DNA-PK phosphorylates and activates NR4A3 and prevents NR4A3 ubiquitinylation and degradation. Interacts with RNF138. Interacts with CYREN (via KBM motif). Interacts with WRN (via KBM motif). Interacts (via N-terminus) with HSF1 (via N-terminus); this interaction is direct and prevents XRCC5/XRCC6 heterodimeric binding and non-homologous end joining (NHEJ) repair activities induced by ionizing radiation (IR). Interacts with DHX9; this interaction occurs in a RNA-dependent manner. Part of the HDP-RNP complex composed of at least HEXIM1, PRKDC, XRCC5, XRCC6, paraspeckle proteins (SFPQ, NONO, PSPC1, RBM14, and MATR3) and NEAT1 RNA. Interacts with ERCC6. Interacts with ATF7. The XRCC5-XRCC6 dimer associates with ALKBH2. Interacts with TPRN; TPRN interacts with a number of DNA damage response proteins, is recruited to sites of DNA damage and may play a role in DNA damage repair. Interacts with ERCC6L2. In terms of processing, ADP-ribosylated by PARP3. Post-translationally, phosphorylated on serine residues. Phosphorylation by PRKDC may enhance helicase activity. Sumoylated. In terms of processing, ubiquitinated by RNF8 via 'Lys-48'-linked ubiquitination following DNA damage, leading to its degradation and removal from DNA damage sites. Ubiquitinated by RNF138, leading to remove the Ku complex from DNA breaks.

The protein localises to the nucleus. The protein resides in the nucleolus. It is found in the chromosome. Its function is as follows. Single-stranded DNA-dependent ATP-dependent helicase that plays a key role in DNA non-homologous end joining (NHEJ) by recruiting DNA-PK to DNA. Required for double-strand break repair and V(D)J recombination. Also has a role in chromosome translocation. The DNA helicase II complex binds preferentially to fork-like ends of double-stranded DNA in a cell cycle-dependent manner. It works in the 3'-5' direction. During NHEJ, the XRCC5-XRRC6 dimer performs the recognition step: it recognizes and binds to the broken ends of the DNA and protects them from further resection. Binding to DNA may be mediated by XRCC6. The XRCC5-XRRC6 dimer acts as a regulatory subunit of the DNA-dependent protein kinase complex DNA-PK by increasing the affinity of the catalytic subunit PRKDC to DNA by 100-fold. The XRCC5-XRRC6 dimer is probably involved in stabilizing broken DNA ends and bringing them together. The assembly of the DNA-PK complex to DNA ends is required for the NHEJ ligation step. The XRCC5-XRRC6 dimer probably also acts as a 5'-deoxyribose-5-phosphate lyase (5'-dRP lyase), by catalyzing the beta-elimination of the 5' deoxyribose-5-phosphate at an abasic site near double-strand breaks. XRCC5 probably acts as the catalytic subunit of 5'-dRP activity, and allows to 'clean' the termini of abasic sites, a class of nucleotide damage commonly associated with strand breaks, before such broken ends can be joined. The XRCC5-XRRC6 dimer together with APEX1 acts as a negative regulator of transcription. In association with NAA15, the XRCC5-XRRC6 dimer binds to the osteocalcin promoter and activates osteocalcin expression. As part of the DNA-PK complex, involved in the early steps of ribosome assembly by promoting the processing of precursor rRNA into mature 18S rRNA in the small-subunit processome. Binding to U3 small nucleolar RNA, recruits PRKDC and XRCC5/Ku86 to the small-subunit processome. Plays a role in the regulation of DNA virus-mediated innate immune response by assembling into the HDP-RNP complex, a complex that serves as a platform for IRF3 phosphorylation and subsequent innate immune response activation through the cGAS-STING pathway. The protein is X-ray repair cross-complementing protein 5 (Xrcc5) of Mus musculus (Mouse).